The sequence spans 201 residues: Recombination protein RecR (201 aa).

The C4-type zinc-finger motif lies at 57–72; sequence CKSCRTFTEEDECAIC. Residues 81-176 enclose the Toprim domain; sequence GQLCVVEMPA…KVTRIAHGIP (96 aa).

It belongs to the RecR family.

May play a role in DNA repair. It seems to be involved in an RecBC-independent recombinational process of DNA repair. It may act with RecF and RecO. The sequence is that of Recombination protein RecR from Glaesserella parasuis serovar 5 (strain SH0165) (Haemophilus parasuis).